A 146-amino-acid chain; its full sequence is Large ribosomal subunit protein uL15 (146 aa).

Over residues 1–13 (MKLHELKPAEGSR) the composition is skewed to basic and acidic residues. The interval 1–48 (MKLHELKPAEGSRKVRNRVGRGIGSGNGKTAGKGHKGQNARSGGGVRL) is disordered. A compositionally biased stretch (gly residues) spans 21–31 (RGIGSGNGKTA).

Belongs to the universal ribosomal protein uL15 family. As to quaternary structure, part of the 50S ribosomal subunit.

Functionally, binds to the 23S rRNA. The chain is Large ribosomal subunit protein uL15 from Bacillus cytotoxicus (strain DSM 22905 / CIP 110041 / 391-98 / NVH 391-98).